The chain runs to 216 residues: Co-chaperone protein SBA1 (216 aa).

At Ser-2 the chain carries N-acetylserine. In terms of domain architecture, CS spans 5–108 (VINPQVAWAQ…LESEYWPRLT (104 aa)). 2 consecutive repeats follow at residues 141–156 (AQGM…AGGA) and 160–174 (GGMD…AGGA). The tract at residues 169–216 (GGAGGAGSPDMAQLQQLLAQSGGNLDMGDFKENDEEDEEEEIEPEVKA) is disordered. Positions 200–216 (ENDEEDEEEEIEPEVKA) are enriched in acidic residues.

It belongs to the p23/wos2 family. Interacts with HSP82.

Its function is as follows. Acts as a co-chaperone. The sequence is that of Co-chaperone protein SBA1 (SBA1) from Saccharomyces cerevisiae (strain ATCC 204508 / S288c) (Baker's yeast).